The primary structure comprises 481 residues: UDP-N-acetylmuramoyl-L-alanyl-D-glutamate--L-lysine ligase (481 aa).

Ser-42 is a UDP-N-acetyl-alpha-D-muramoyl-L-alanyl-D-glutamate binding site. Position 118 to 124 (118 to 124 (GTKGKTT)) interacts with ATP. UDP-N-acetyl-alpha-D-muramoyl-L-alanyl-D-glutamate is bound by residues Gln-158, 160–161 (TT), Ser-187, and Arg-195. Lys-229 carries the N6-carboxylysine modification. The short motif at 404–407 (DDPN) is the L-lysine recognition motif element.

It belongs to the MurCDEF family. MurE subfamily. Post-translationally, carboxylation is probably crucial for Mg(2+) binding and, consequently, for the gamma-phosphate positioning of ATP.

It localises to the cytoplasm. The catalysed reaction is UDP-N-acetyl-alpha-D-muramoyl-L-alanyl-D-glutamate + L-lysine + ATP = UDP-N-acetyl-alpha-D-muramoyl-L-alanyl-gamma-D-glutamyl-L-lysine + ADP + phosphate + H(+). It participates in cell wall biogenesis; peptidoglycan biosynthesis. Catalyzes the addition of L-lysine to the nucleotide precursor UDP-N-acetylmuramoyl-L-alanyl-D-glutamate (UMAG) in the biosynthesis of bacterial cell-wall peptidoglycan. This Streptococcus pyogenes serotype M3 (strain SSI-1) protein is UDP-N-acetylmuramoyl-L-alanyl-D-glutamate--L-lysine ligase.